A 163-amino-acid polypeptide reads, in one-letter code: Cytosolic iron-sulfur assembly component 2B (163 aa).

Belongs to the MIP18 family. In terms of assembly, component of the CIA complex. Component of the MMXD complex, which includes CIAO1, ERCC2, CIAO2B, MMS19 and SLC25A5. Interacts with CIAO1, ERCC2 and MMS19; the interactions are direct. Interacts with KIF4A; the interaction facilitates the transfer of Fe-S clusters to KIF4A to ensure proper localization of KIF4A to the mitotic machinery. Interacts with CCDC117; the interaction is direct.

Its subcellular location is the nucleus. It is found in the cytoplasm. The protein localises to the cytoskeleton. It localises to the spindle. Its function is as follows. Component of the cytosolic iron-sulfur protein assembly (CIA) complex, a multiprotein complex that mediates the incorporation of iron-sulfur cluster into extramitochondrial Fe/S proteins. As a CIA complex component and in collaboration with CIAO1 and MMS19, binds to and facilitates the assembly of most cytosolic-nuclear Fe/S proteins. As part of the mitotic spindle-associated MMXD complex it plays a role in chromosome segregation, probably by facilitating iron-sulfur cluster assembly into ERCC2/XPD. Together with MMS19, facilitates the transfer of Fe-S clusters to the motor protein KIF4A, which ensures proper localization of KIF4A to mitotic machinery components to promote the progression of mitosis. In Mus musculus (Mouse), this protein is Cytosolic iron-sulfur assembly component 2B.